Reading from the N-terminus, the 88-residue chain is Putative membrane protein insertion efficiency factor (88 aa).

Belongs to the UPF0161 family.

The protein localises to the cell inner membrane. Its function is as follows. Could be involved in insertion of integral membrane proteins into the membrane. The chain is Putative membrane protein insertion efficiency factor from Burkholderia vietnamiensis (strain G4 / LMG 22486) (Burkholderia cepacia (strain R1808)).